The sequence spans 431 residues: Glutamate-1-semialdehyde 2,1-aminomutase (431 aa).

Position 265 is an N6-(pyridoxal phosphate)lysine (K265).

The protein belongs to the class-III pyridoxal-phosphate-dependent aminotransferase family. HemL subfamily. As to quaternary structure, homodimer. Pyridoxal 5'-phosphate is required as a cofactor.

The protein resides in the cytoplasm. The catalysed reaction is (S)-4-amino-5-oxopentanoate = 5-aminolevulinate. It functions in the pathway porphyrin-containing compound metabolism; protoporphyrin-IX biosynthesis; 5-aminolevulinate from L-glutamyl-tRNA(Glu): step 2/2. This is Glutamate-1-semialdehyde 2,1-aminomutase from Aliivibrio fischeri (strain MJ11) (Vibrio fischeri).